The sequence spans 338 residues: Diacylglycerol acyltransferase/mycolyltransferase Ag85A (338 aa).

The first 42 residues, 1–42 (MQLVDRVRGAVTGMSRRLVVGAVGAALVSGLVGAVGGTATAG), serve as a signal peptide directing secretion. 85–86 (LR) serves as a coordination point for substrate. The tract at residues 101-111 (FEWYDQSGLSV) is fibronectin-binding. Residues C130 and C135 are joined by a disulfide bond. Positions 169 and 197 each coordinate substrate. Residue S169 is the Nucleophile of the active site. Residue E273 is part of the active site. Substrate-binding positions include 275-278 (FVRT), K282, and 305-307 (HSW). H305 is an active-site residue.

It belongs to the mycobacterial A85 antigen family. In terms of assembly, homodimer.

The protein localises to the secreted. It localises to the cell wall. The protein resides in the cytoplasm. The enzyme catalyses an acyl-CoA + a 1,2-diacyl-sn-glycerol = a triacyl-sn-glycerol + CoA. It carries out the reaction 2 alpha,alpha'-trehalose 6-mycolate = alpha,alpha'-trehalose 6,6'-bismycolate + alpha,alpha-trehalose. Its function is as follows. The antigen 85 proteins (FbpA, FbpB, FbpC) are responsible for the high affinity of mycobacteria for fibronectin, a large adhesive glycoprotein, which facilitates the attachment of M.tuberculosis to murine alveolar macrophages (AMs). They also help to maintain the integrity of the cell wall by catalyzing the transfer of mycolic acids to cell wall arabinogalactan, and through the synthesis of alpha,alpha-trehalose dimycolate (TDM, cord factor). They catalyze the transfer of a mycoloyl residue from one molecule of alpha,alpha-trehalose monomycolate (TMM) to another TMM, leading to the formation of TDM. FbpA mediates triacylglycerol (TAG) formation with long-chain acyl-CoA as the acyl donor and 1,2-dipalmitoyl-sn-glycerol (1,2-dipalmitin) as the acyl acceptor. It has a preference for C26:0-CoA over C18:1-CoA. The sequence is that of Diacylglycerol acyltransferase/mycolyltransferase Ag85A (fbpA) from Mycobacterium bovis (strain ATCC BAA-935 / AF2122/97).